A 292-amino-acid polypeptide reads, in one-letter code: UPF0696 protein C11orf68 homolog (292 aa).

Low complexity predominate over residues 1–10 (MAAAAAAVAG). Residues 1 to 60 (MAAAAAAVAGAGRGGGGGAEPRQERSRARGWAGAERSEGRRMEPGEELEEEDSPGGREDG) are disordered. Positions 35-44 (ERSEGRRMEP) are enriched in basic and acidic residues.

The protein belongs to the UPF0696 family.

The sequence is that of UPF0696 protein C11orf68 homolog from Bos taurus (Bovine).